The following is a 420-amino-acid chain: Glucose-1-phosphate adenylyltransferase (420 aa).

Residues Tyr107, Gly172, 187–188 (EK), and Ser205 contribute to the alpha-D-glucose 1-phosphate site.

The protein belongs to the bacterial/plant glucose-1-phosphate adenylyltransferase family. Homotetramer.

It catalyses the reaction alpha-D-glucose 1-phosphate + ATP + H(+) = ADP-alpha-D-glucose + diphosphate. It functions in the pathway glycan biosynthesis; glycogen biosynthesis. Functionally, involved in the biosynthesis of ADP-glucose, a building block required for the elongation reactions to produce glycogen. Catalyzes the reaction between ATP and alpha-D-glucose 1-phosphate (G1P) to produce pyrophosphate and ADP-Glc. This chain is Glucose-1-phosphate adenylyltransferase, found in Rhodopseudomonas palustris (strain TIE-1).